The sequence spans 138 residues: Putative pre-16S rRNA nuclease (138 aa).

Belongs to the YqgF nuclease family.

It localises to the cytoplasm. Functionally, could be a nuclease involved in processing of the 5'-end of pre-16S rRNA. This Listeria monocytogenes serotype 4b (strain CLIP80459) protein is Putative pre-16S rRNA nuclease.